We begin with the raw amino-acid sequence, 498 residues long: Cytochrome P450 71B24 (498 aa).

Residues 1 to 21 form a helical membrane-spanning segment; sequence MSILLYFIALLSLIIIKKIKD. Residue Cys-442 participates in heme binding.

The protein belongs to the cytochrome P450 family. The cofactor is heme.

The protein localises to the membrane. This is Cytochrome P450 71B24 (CYP71B24) from Arabidopsis thaliana (Mouse-ear cress).